Here is a 368-residue protein sequence, read N- to C-terminus: Putative alcohol dehydrogenase D (368 aa).

Zn(2+)-binding residues include C40, H61, C91, C94, C97, C105, and C167.

The protein belongs to the zinc-containing alcohol dehydrogenase family. Zn(2+) serves as cofactor.

It carries out the reaction a primary alcohol + NAD(+) = an aldehyde + NADH + H(+). The catalysed reaction is a secondary alcohol + NAD(+) = a ketone + NADH + H(+). In terms of biological role, required for maintaining the appropriate mycolic acid composition and permeability of the envelope on its exposure to acidic pH. This Mycobacterium tuberculosis (strain CDC 1551 / Oshkosh) protein is Putative alcohol dehydrogenase D (adhD).